The chain runs to 280 residues: Chemotaxis protein methyltransferase 2 (280 aa).

The CheR-type methyltransferase domain occupies 10–280; the sequence is FGNQEFHYTR…SVGQTVYSPA (271 aa). S-adenosyl-L-methionine is bound by residues asparagine 85, threonine 87, arginine 91, glutamate 125, aspartate 150, 208–209, and 226–227; these read NL and RN.

As to quaternary structure, interacts with the C-terminal pentapeptide GWEEF of the methyl-accepting chemotaxis protein McpB.

The enzyme catalyses L-glutamyl-[protein] + S-adenosyl-L-methionine = [protein]-L-glutamate 5-O-methyl ester + S-adenosyl-L-homocysteine. Its function is as follows. Methylation of the methyl-accepting chemotaxis proteins (MCP) to form gamma-glutamyl methyl ester residues in MCP. It specifically targets the McpB chemoreceptor. The polypeptide is Chemotaxis protein methyltransferase 2 (Pseudomonas aeruginosa (strain ATCC 15692 / DSM 22644 / CIP 104116 / JCM 14847 / LMG 12228 / 1C / PRS 101 / PAO1)).